We begin with the raw amino-acid sequence, 1234 residues long: MDEKGLSNILQALNVVHSPESSRETRFSAQQLLDELKDSYSSPSVAIQLLELNEQAFSSLGCKLDIHIVQHFSLSLFETSVGMNWKSFSNKEKESVTSFLCKISLEDNNLLSVHFVRSKLASVFIEIAKRDWYNTWREEFDSFLQSLWSLSLQHRQLSSLILRGIMEDLYQYDDPVASLRSHILFNALISILSSSSTLHKLYPSGLPYSVTIPSNNEGWLIRWGNALESQDDALECLKCFKSCLSWVATDSIREANIVSHICQILVQGPIFLKTHAIDCIYICVTRTMEIDDPLWEIVEEMLSPSSLYTLHQVYTATSESINIKTLSSTTPEYILLKKLSETIVALGQYNYLDSNRRKCIKLTSLDTYSLLVLEIMKHPSLLISAISQHFWVLALRDPIISKHEKFQIVYPELLSIASERLLRFEDAVVELIPESATAKYLQEDVEGVSAVHSFCGNFRRFMFDIVRLTVSITPIESLNWIQNRFQSTVLGNMEDIQSQTEFFSKTSPLYLTMDVGFSTIEAFLHGVTRWNENTSDDPATYEIILQNLFLWCKQLVEINFKDPMLITRLISVLVLFTSILARENTTLLGVVLEKIISAVTYDNTSASYGFSDVQKINEMRSRCCFELVRLGELMPNPLMNIFDQLQSIIDQLDNATTLTGSEIVMLKTFLFVITQFSDVNIEVKNEYFEKLVGPVVKTWLDVQPPVNSPMEFLNHIGFPQMAEYLSAKYPYNADYTQFELDADAASYQSNLETGRKWLWPIKCLGRFCEATCSNKHIHPSEFEGQKNLWQVILPNVVPNLLKLVEQLHCCYEPSFISGLGMHNSSILQKSIVERFWLHGVSQISKNQFLEESYKMDVSANKLIHSFGHFLRRLREYCYYAIASFMRLGQAFFCVPGLSKQFLTAFFSHAAGLSLHQWTSMVNVVIKPYCVNCPAELRDECLLPLLPALLSELDHKLVSEWRRINDRGLLVEEDAEETGEDDDLSEEMIEESLLRHLTYATAKLITETFLQITPTQSRSNVSSSLIGKETVEGPVKLSEYVLDNAIICEPLLCTLCHLLVIHDSRTVGLVVNAFLAITPLLVSEQAHSLVREFICQQVFQSVILAIHDPYFESMQSDFIRLACIILSYSQGITDSAFQLLASIPALANQENLVPAFFNKFREASTLKIQKALLTRLLNSGRIVPRTDRRAVNAAILDVSAKEMLKRFEKSVSLQDEQKNDVLSRDEDTGLANLFE.

This is an uncharacterized protein from Schizosaccharomyces pombe (strain 972 / ATCC 24843) (Fission yeast).